A 415-amino-acid polypeptide reads, in one-letter code: Phosphoribosylamine--glycine ligase (415 aa).

The ATP-grasp domain maps to 108–311 (KKIMKKYNIP…LMQHIIDLDE (204 aa)). Residue 134–191 (IENCELPVVVKKDGLAAGKGVIIADTIEAARSAIEIMYGDEEEGTVVFETFLEGEEFS) participates in ATP binding. Mg(2+)-binding residues include E281 and N283.

This sequence belongs to the GARS family. It depends on Mg(2+) as a cofactor. Requires Mn(2+) as cofactor.

The enzyme catalyses 5-phospho-beta-D-ribosylamine + glycine + ATP = N(1)-(5-phospho-beta-D-ribosyl)glycinamide + ADP + phosphate + H(+). The protein operates within purine metabolism; IMP biosynthesis via de novo pathway; N(1)-(5-phospho-D-ribosyl)glycinamide from 5-phospho-alpha-D-ribose 1-diphosphate: step 2/2. This is Phosphoribosylamine--glycine ligase from Staphylococcus aureus (strain Mu50 / ATCC 700699).